Reading from the N-terminus, the 384-residue chain is MAKHLFTSESVSEGHPDKIADQISDAVLDAILEQDPKARVACETYVKTGMVLVGGEITTSAWVDIEEITRKTVREIGYVHSDMGFDANSCAVLSAIGKQSPDINQGVDRTDPLEQGAGDQGLMFGYATNETEVLMPAPVTYAHRLVQRQAEVRKNGTLPWLRPDAKSQVTFQYDDGKIVGIDAVVLSTQHSEDISLKDLQEAVMEEIIKPVLPTEWLSAGTKYHINPTGRFVIGGPMGDCGLTGRKIIVDTYGGMARHGGGAFSGKDPSKVDRSAAYAARYVAKNIVAAGLADRCEIQVSYAIGVAEPTSIMVETFGTEKIPTEQLTLLVREFFDLRPYGLIQMMDLLQPIYRETAAYGHFGREHFPWEATDKAALLRDAAGLK.

Residue His15 participates in ATP binding. Position 17 (Asp17) interacts with Mg(2+). Glu43 provides a ligand contact to K(+). L-methionine contacts are provided by Glu56 and Gln99. The tract at residues 99–109 (QSPDINQGVDR) is flexible loop. Residues 164–166 (DAK), 230–231 (RF), Asp239, 245–246 (RK), Ala262, and Lys266 each bind ATP. Residue Asp239 participates in L-methionine binding. Lys270 provides a ligand contact to L-methionine.

Belongs to the AdoMet synthase family. As to quaternary structure, homotetramer; dimer of dimers. Mg(2+) serves as cofactor. It depends on K(+) as a cofactor.

It localises to the cytoplasm. It catalyses the reaction L-methionine + ATP + H2O = S-adenosyl-L-methionine + phosphate + diphosphate. Its pathway is amino-acid biosynthesis; S-adenosyl-L-methionine biosynthesis; S-adenosyl-L-methionine from L-methionine: step 1/1. Catalyzes the formation of S-adenosylmethionine (AdoMet) from methionine and ATP. The overall synthetic reaction is composed of two sequential steps, AdoMet formation and the subsequent tripolyphosphate hydrolysis which occurs prior to release of AdoMet from the enzyme. In Serratia proteamaculans (strain 568), this protein is S-adenosylmethionine synthase.